Consider the following 447-residue polypeptide: Probable glycine dehydrogenase (decarboxylating) subunit 1 (447 aa).

It belongs to the GcvP family. N-terminal subunit subfamily. The glycine cleavage system is composed of four proteins: P, T, L and H. In this organism, the P 'protein' is a heterodimer of two subunits.

It catalyses the reaction N(6)-[(R)-lipoyl]-L-lysyl-[glycine-cleavage complex H protein] + glycine + H(+) = N(6)-[(R)-S(8)-aminomethyldihydrolipoyl]-L-lysyl-[glycine-cleavage complex H protein] + CO2. In terms of biological role, the glycine cleavage system catalyzes the degradation of glycine. The P protein binds the alpha-amino group of glycine through its pyridoxal phosphate cofactor; CO(2) is released and the remaining methylamine moiety is then transferred to the lipoamide cofactor of the H protein. The chain is Probable glycine dehydrogenase (decarboxylating) subunit 1 from Maricaulis maris (strain MCS10) (Caulobacter maris).